The primary structure comprises 146 residues: D-aminoacyl-tRNA deacylase (146 aa).

Positions 137-138 (GP) match the Gly-cisPro motif, important for rejection of L-amino acids motif.

The protein belongs to the DTD family. In terms of assembly, homodimer.

The protein resides in the cytoplasm. It catalyses the reaction glycyl-tRNA(Ala) + H2O = tRNA(Ala) + glycine + H(+). The enzyme catalyses a D-aminoacyl-tRNA + H2O = a tRNA + a D-alpha-amino acid + H(+). Its function is as follows. An aminoacyl-tRNA editing enzyme that deacylates mischarged D-aminoacyl-tRNAs. Also deacylates mischarged glycyl-tRNA(Ala), protecting cells against glycine mischarging by AlaRS. Acts via tRNA-based rather than protein-based catalysis; rejects L-amino acids rather than detecting D-amino acids in the active site. By recycling D-aminoacyl-tRNA to D-amino acids and free tRNA molecules, this enzyme counteracts the toxicity associated with the formation of D-aminoacyl-tRNA entities in vivo and helps enforce protein L-homochirality. The chain is D-aminoacyl-tRNA deacylase from Bacillus thuringiensis subsp. konkukian (strain 97-27).